The sequence spans 157 residues: Small ribosomal subunit protein uS7 (157 aa).

This sequence belongs to the universal ribosomal protein uS7 family. Part of the 30S ribosomal subunit. Contacts proteins S9 and S11.

One of the primary rRNA binding proteins, it binds directly to 16S rRNA where it nucleates assembly of the head domain of the 30S subunit. Is located at the subunit interface close to the decoding center, probably blocks exit of the E-site tRNA. In Variovorax paradoxus (strain S110), this protein is Small ribosomal subunit protein uS7.